The chain runs to 831 residues: Glycerol-3-phosphate acyltransferase (831 aa).

The HXXXXD motif motif lies at 304–309; it reads CHRSHM. The segment at 801–831 is disordered; the sequence is VSMPAETSNQPEAPETPETPETPEPEGKTES.

This sequence belongs to the GPAT/DAPAT family.

The protein localises to the cell inner membrane. The catalysed reaction is sn-glycerol 3-phosphate + an acyl-CoA = a 1-acyl-sn-glycero-3-phosphate + CoA. Its pathway is phospholipid metabolism; CDP-diacylglycerol biosynthesis; CDP-diacylglycerol from sn-glycerol 3-phosphate: step 1/3. This Yersinia pseudotuberculosis serotype IB (strain PB1/+) protein is Glycerol-3-phosphate acyltransferase.